A 172-amino-acid polypeptide reads, in one-letter code: Adenine phosphoribosyltransferase (172 aa).

This sequence belongs to the purine/pyrimidine phosphoribosyltransferase family. As to quaternary structure, homodimer.

The protein localises to the cytoplasm. It carries out the reaction AMP + diphosphate = 5-phospho-alpha-D-ribose 1-diphosphate + adenine. Its pathway is purine metabolism; AMP biosynthesis via salvage pathway; AMP from adenine: step 1/1. In terms of biological role, catalyzes a salvage reaction resulting in the formation of AMP, that is energically less costly than de novo synthesis. In Methanococcus maripaludis (strain C7 / ATCC BAA-1331), this protein is Adenine phosphoribosyltransferase.